Consider the following 208-residue polypeptide: ATP phosphoribosyltransferase (208 aa).

Belongs to the ATP phosphoribosyltransferase family. Short subfamily. As to quaternary structure, heteromultimer composed of HisG and HisZ subunits.

The protein resides in the cytoplasm. It catalyses the reaction 1-(5-phospho-beta-D-ribosyl)-ATP + diphosphate = 5-phospho-alpha-D-ribose 1-diphosphate + ATP. It participates in amino-acid biosynthesis; L-histidine biosynthesis; L-histidine from 5-phospho-alpha-D-ribose 1-diphosphate: step 1/9. Catalyzes the condensation of ATP and 5-phosphoribose 1-diphosphate to form N'-(5'-phosphoribosyl)-ATP (PR-ATP). Has a crucial role in the pathway because the rate of histidine biosynthesis seems to be controlled primarily by regulation of HisG enzymatic activity. This Lactococcus lactis subsp. cremoris (strain MG1363) protein is ATP phosphoribosyltransferase.